The primary structure comprises 1119 residues: DNA-directed RNA polymerase subunit beta (1119 aa).

This sequence belongs to the RNA polymerase beta chain family. In terms of assembly, the RNAP catalytic core consists of 2 alpha, 1 beta, 1 beta' and 1 omega subunit. When a sigma factor is associated with the core the holoenzyme is formed, which can initiate transcription.

The enzyme catalyses RNA(n) + a ribonucleoside 5'-triphosphate = RNA(n+1) + diphosphate. DNA-dependent RNA polymerase catalyzes the transcription of DNA into RNA using the four ribonucleoside triphosphates as substrates. This Thermus thermophilus (strain ATCC BAA-163 / DSM 7039 / HB27) protein is DNA-directed RNA polymerase subunit beta.